A 270-amino-acid polypeptide reads, in one-letter code: Ribosomal RNA small subunit methyltransferase A (270 aa).

6 residues coordinate S-adenosyl-L-methionine: asparagine 15, isoleucine 17, glycine 42, glutamate 64, aspartate 89, and asparagine 108.

Belongs to the class I-like SAM-binding methyltransferase superfamily. rRNA adenine N(6)-methyltransferase family. RsmA subfamily.

It is found in the cytoplasm. It carries out the reaction adenosine(1518)/adenosine(1519) in 16S rRNA + 4 S-adenosyl-L-methionine = N(6)-dimethyladenosine(1518)/N(6)-dimethyladenosine(1519) in 16S rRNA + 4 S-adenosyl-L-homocysteine + 4 H(+). Specifically dimethylates two adjacent adenosines (A1518 and A1519) in the loop of a conserved hairpin near the 3'-end of 16S rRNA in the 30S particle. May play a critical role in biogenesis of 30S subunits. The sequence is that of Ribosomal RNA small subunit methyltransferase A from Anaplasma marginale (strain Florida).